A 64-amino-acid polypeptide reads, in one-letter code: uncharacterized protein (64 aa).

This is an uncharacterized protein from Mycoplasma (Bacteriophage L2).